A 92-amino-acid chain; its full sequence is UPF0125 protein NMA1005 (92 aa).

Belongs to the UPF0125 (RnfH) family.

The chain is UPF0125 protein NMA1005 from Neisseria meningitidis serogroup A / serotype 4A (strain DSM 15465 / Z2491).